A 421-amino-acid polypeptide reads, in one-letter code: ATP-dependent RNA helicase RhlB (421 aa).

A Q motif motif is present at residues 9–37 (QKFSDFALHPQVVEALEKKGFYNCTPIQA). One can recognise a Helicase ATP-binding domain in the interval 40–219 (LPLTLAGRDV…FEQMNNAEYV (180 aa)). ATP is bound at residue 53–60 (AQTGTGKT). The DEAD box signature appears at 165–168 (DEAD). The Helicase C-terminal domain occupies 245–390 (RLLQTLIEEE…VSKYNPEALM (146 aa)). Residues 396-421 (PLRLTRSRPGNGPRRAGAPRNRRRSG) are disordered. Over residues 402–414 (SRPGNGPRRAGAP) the composition is skewed to low complexity.

This sequence belongs to the DEAD box helicase family. RhlB subfamily. Component of the RNA degradosome, which is a multiprotein complex involved in RNA processing and mRNA degradation.

Its subcellular location is the cytoplasm. It carries out the reaction ATP + H2O = ADP + phosphate + H(+). Its function is as follows. DEAD-box RNA helicase involved in RNA degradation. Has RNA-dependent ATPase activity and unwinds double-stranded RNA. This Salmonella paratyphi A (strain AKU_12601) protein is ATP-dependent RNA helicase RhlB.